A 986-amino-acid chain; its full sequence is Translation initiation factor IF-2 (986 aa).

The span at 75–94 shows a compositional bias: basic and acidic residues; it reads KRLSRLEEQSRKTYEKEQHL. Disordered regions lie at residues 75–105, 127–148, 185–258, and 277–394; these read KRLS…APPL, PPSK…PDAP, SEVP…VSFD, and GRHK…HEED. Composition is skewed to low complexity over residues 185 to 210 and 218 to 235; these read SEVP…ESPL and SEPQ…LPEI. The segment covering 292–313 has biased composition (basic and acidic residues); sequence DALKDEFEPKPAEESRVEEKVV. Over residues 315-338 the composition is skewed to low complexity; it reads AKKPPVKAAADVKPKPVVADSSSS. Basic residues predominate over residues 339–348; it reads AKKKGKKKKK. Residues 483–653 form the tr-type G domain; the sequence is TRPPVVTIMG…LTEAEMRELR (171 aa). Residues 492–499 form a G1 region; that stretch reads GHVDHGKT. 492–499 is a binding site for GTP; that stretch reads GHVDHGKT. Positions 517 to 521 are G2; sequence GITQH. The tract at residues 539 to 542 is G3; it reads DTPG. GTP-binding positions include 539–543 and 593–596; these read DTPGH and NKID. Residues 593–596 are G4; that stretch reads NKID. The segment at 629–631 is G5; sequence SAK.

Belongs to the TRAFAC class translation factor GTPase superfamily. Classic translation factor GTPase family. IF-2 subfamily.

Its subcellular location is the cytoplasm. One of the essential components for the initiation of protein synthesis. Protects formylmethionyl-tRNA from spontaneous hydrolysis and promotes its binding to the 30S ribosomal subunits. Also involved in the hydrolysis of GTP during the formation of the 70S ribosomal complex. The polypeptide is Translation initiation factor IF-2 (Pelodictyon phaeoclathratiforme (strain DSM 5477 / BU-1)).